The sequence spans 559 residues: 5'-AMP-activated protein kinase catalytic subunit alpha-1 (559 aa).

The 253-residue stretch at 27–279 (YILGDTLGVG…IKDIREHEWF (253 aa)) folds into the Protein kinase domain. Phosphothreonine is present on threonine 32. ATP is bound by residues 33–41 (LGVGTFGKV) and lysine 56. The active-site Proton acceptor is aspartate 150. Threonine 183 is modified (phosphothreonine; by LKB1 and CaMKK2). 2 positions are modified to phosphothreonine: threonine 269 and threonine 355. The segment at 302–381 (EALKEVCEKF…PERVPFLVAE (80 aa)) is AIS. At serine 356 the chain carries Phosphoserine. Serine 360 carries the post-translational modification Phosphoserine; by ULK1. At threonine 368 the chain carries Phosphothreonine; by ULK1. A Phosphothreonine modification is found at threonine 382. 3 positions are modified to phosphoserine: serine 397, serine 467, and serine 486. Polar residues predominate over residues 485 to 505 (KSGTATPQRSGSVSNYRSCQR). The segment at 485-536 (KSGTATPQRSGSVSNYRSCQRSDSDAEAQGKSSEVSLTSSVTSLDSSPVDLT) is disordered. Threonine 488 and threonine 490 each carry phosphothreonine. Serine 496, serine 508, serine 524, and serine 527 each carry phosphoserine. Positions 516-535 (SSEVSLTSSVTSLDSSPVDL) are enriched in low complexity.

Belongs to the protein kinase superfamily. CAMK Ser/Thr protein kinase family. SNF1 subfamily. AMPK is a heterotrimer of an alpha catalytic subunit (PRKAA1 or PRKAA2), a beta (PRKAB1 or PRKAB2) and a gamma non-catalytic subunits (PRKAG1, PRKAG2 or PRKAG3). Interacts with FNIP1 and FNIP2. In terms of assembly, (Microbial infection) Interacts with Dengue type 2 virus non-structural protein 1; this interaction promotes the AMPK/ERK/mTOR signaling pathway to induce autophagy. Mg(2+) serves as cofactor. Ubiquitinated. In terms of processing, phosphorylated at Thr-183 by STK11/LKB1 in complex with STE20-related adapter-alpha (STRADA) pseudo kinase and CAB39. Also phosphorylated at Thr-183 by CAMKK2; triggered by a rise in intracellular calcium ions, without detectable changes in the AMP/ATP ratio. CAMKK1 can also phosphorylate Thr-183, but at a much lower level. Dephosphorylated by protein phosphatase 2A and 2C (PP2A and PP2C). Phosphorylated by ULK1 and ULK2; leading to negatively regulate AMPK activity and suggesting the existence of a regulatory feedback loop between ULK1, ULK2 and AMPK. Dephosphorylated by PPM1A and PPM1B. Post-translationally, glycosylated; O-GlcNAcylated by OGT, promoting the AMP-activated protein kinase (AMPK) activity.

It is found in the cytoplasm. It localises to the nucleus. It carries out the reaction L-seryl-[protein] + ATP = O-phospho-L-seryl-[protein] + ADP + H(+). The enzyme catalyses L-threonyl-[protein] + ATP = O-phospho-L-threonyl-[protein] + ADP + H(+). It catalyses the reaction L-seryl-[acetyl-CoA carboxylase] + ATP = O-phospho-L-seryl-[acetyl-CoA carboxylase] + ADP + H(+). The catalysed reaction is L-seryl-[3-hydroxy-3-methylglutaryl-coenzyme A reductase] + ATP = O-phospho-L-seryl-[3-hydroxy-3-methylglutaryl-coenzyme A reductase] + ADP + H(+). It carries out the reaction L-seryl-[tau protein] + ATP = O-phospho-L-seryl-[tau protein] + ADP + H(+). The enzyme catalyses L-threonyl-[tau protein] + ATP = O-phospho-L-threonyl-[tau protein] + ADP + H(+). Its activity is regulated as follows. Activated by phosphorylation on Thr-183. Binding of AMP to non-catalytic gamma subunit (PRKAG1, PRKAG2 or PRKAG3) results in allosteric activation, inducing phosphorylation on Thr-183. AMP-binding to gamma subunit also sustains activity by preventing dephosphorylation of Thr-183. ADP also stimulates Thr-183 phosphorylation, without stimulating already phosphorylated AMPK. ATP promotes dephosphorylation of Thr-183, rendering the enzyme inactive. Under physiological conditions AMPK mainly exists in its inactive form in complex with ATP, which is much more abundant than AMP. AMPK is activated by antihyperglycemic drug metformin, a drug prescribed to patients with type 2 diabetes: in vivo, metformin seems to mainly inhibit liver gluconeogenesis. However, metformin can be used to activate AMPK in muscle and other cells in culture or ex vivo. Selectively inhibited by compound C (6-[4-(2-Piperidin-1-yl-ethoxy)-phenyl)]-3-pyridin-4-yl-pyyrazolo[1,5-a] pyrimidine. Activated by resveratrol, a natural polyphenol present in red wine, and S17834, a synthetic polyphenol. Its function is as follows. Catalytic subunit of AMP-activated protein kinase (AMPK), an energy sensor protein kinase that plays a key role in regulating cellular energy metabolism. In response to reduction of intracellular ATP levels, AMPK activates energy-producing pathways and inhibits energy-consuming processes: inhibits protein, carbohydrate and lipid biosynthesis, as well as cell growth and proliferation. AMPK acts via direct phosphorylation of metabolic enzymes, and by longer-term effects via phosphorylation of transcription regulators. Regulates lipid synthesis by phosphorylating and inactivating lipid metabolic enzymes such as ACACA, ACACB, GYS1, HMGCR and LIPE; regulates fatty acid and cholesterol synthesis by phosphorylating acetyl-CoA carboxylase (ACACA and ACACB) and hormone-sensitive lipase (LIPE) enzymes, respectively. Promotes lipolysis of lipid droplets by mediating phosphorylation of isoform 1 of CHKA (CHKalpha2). Regulates insulin-signaling and glycolysis by phosphorylating IRS1, PFKFB2 and PFKFB3. AMPK stimulates glucose uptake in muscle by increasing the translocation of the glucose transporter SLC2A4/GLUT4 to the plasma membrane, possibly by mediating phosphorylation of TBC1D4/AS160. Regulates transcription and chromatin structure by phosphorylating transcription regulators involved in energy metabolism such as CRTC2/TORC2, FOXO3, histone H2B, HDAC5, MEF2C, MLXIPL/ChREBP, EP300, HNF4A, p53/TP53, SREBF1, SREBF2 and PPARGC1A. Acts as a key regulator of glucose homeostasis in liver by phosphorylating CRTC2/TORC2, leading to CRTC2/TORC2 sequestration in the cytoplasm. In response to stress, phosphorylates 'Ser-36' of histone H2B (H2BS36ph), leading to promote transcription. Acts as a key regulator of cell growth and proliferation by phosphorylating FNIP1, TSC2, RPTOR, WDR24 and ATG1/ULK1: in response to nutrient limitation, negatively regulates the mTORC1 complex by phosphorylating RPTOR component of the mTORC1 complex and by phosphorylating and activating TSC2. Also phosphorylates and inhibits GATOR2 subunit WDR24 in response to nutrient limitation, leading to suppress glucose-mediated mTORC1 activation. In response to energetic stress, phosphorylates FNIP1, inactivating the non-canonical mTORC1 signaling, thereby promoting nuclear translocation of TFEB and TFE3, and inducing transcription of lysosomal or autophagy genes. In response to nutrient limitation, promotes autophagy by phosphorylating and activating ATG1/ULK1. In that process, it also activates WDR45/WIPI4. Phosphorylates CASP6, thereby preventing its autoprocessing and subsequent activation. In response to nutrient limitation, phosphorylates transcription factor FOXO3 promoting FOXO3 mitochondrial import. Also acts as a regulator of cellular polarity by remodeling the actin cytoskeleton; probably by indirectly activating myosin. AMPK also acts as a regulator of circadian rhythm by mediating phosphorylation of CRY1, leading to destabilize it. May regulate the Wnt signaling pathway by phosphorylating CTNNB1, leading to stabilize it. Also has tau-protein kinase activity: in response to amyloid beta A4 protein (APP) exposure, activated by CAMKK2, leading to phosphorylation of MAPT/TAU; however the relevance of such data remains unclear in vivo. Also phosphorylates CFTR, EEF2K, KLC1, NOS3 and SLC12A1. Regulates hepatic lipogenesis. Activated via SIRT3, represses sterol regulatory element-binding protein (SREBP) transcriptional activities and ATP-consuming lipogenesis to restore cellular energy balance. Upon stress, regulates mitochondrial fragmentation through phosphorylation of MTFR1L. The protein is 5'-AMP-activated protein kinase catalytic subunit alpha-1 of Homo sapiens (Human).